A 201-amino-acid polypeptide reads, in one-letter code: Probable cytokinin riboside 5'-monophosphate phosphoribohydrolase LOG6 (201 aa).

Residues Glu-89, 107 to 108 (RK), 124 to 130 (GYGTLEE), and Thr-136 contribute to the substrate site.

Belongs to the LOG family.

It catalyses the reaction N(6)-(dimethylallyl)adenosine 5'-phosphate + H2O = N(6)-dimethylallyladenine + D-ribose 5-phosphate. The catalysed reaction is 9-ribosyl-trans-zeatin 5'-phosphate + H2O = trans-zeatin + D-ribose 5-phosphate. Functionally, cytokinin-activating enzyme working in the direct activation pathway. Phosphoribohydrolase that converts inactive cytokinin nucleotides to the biologically active free-base forms. This is Probable cytokinin riboside 5'-monophosphate phosphoribohydrolase LOG6 (LOG6) from Arabidopsis thaliana (Mouse-ear cress).